The chain runs to 545 residues: ATP synthase subunit alpha (545 aa).

174–181 (GDRKTGKT) lines the ATP pocket.

Belongs to the ATPase alpha/beta chains family. F-type ATPases have 2 components, CF(1) - the catalytic core - and CF(0) - the membrane proton channel. CF(1) has five subunits: alpha(3), beta(3), gamma(1), delta(1), epsilon(1). CF(0) has three main subunits: a(1), b(2) and c(9-12). The alpha and beta chains form an alternating ring which encloses part of the gamma chain. CF(1) is attached to CF(0) by a central stalk formed by the gamma and epsilon chains, while a peripheral stalk is formed by the delta and b chains.

It localises to the cell membrane. It carries out the reaction ATP + H2O + 4 H(+)(in) = ADP + phosphate + 5 H(+)(out). Functionally, produces ATP from ADP in the presence of a proton gradient across the membrane. The alpha chain is a regulatory subunit. The sequence is that of ATP synthase subunit alpha from Cutibacterium acnes (strain DSM 16379 / KPA171202) (Propionibacterium acnes).